Here is a 118-residue protein sequence, read N- to C-terminus: MIGIDITSTDRIKKMYEKFGDKFYEKFLNPDEIELIKKPETAAGFWAAKEAASKAIGTGIGGSCSFHDIKIKKDALGAPKIKYKKEIRKKFGIKKSHLTITHDAGFAIAVVVNVLKKK.

2 residues coordinate Mg(2+): Asp5 and Glu50.

This sequence belongs to the P-Pant transferase superfamily. AcpS family. Requires Mg(2+) as cofactor.

It localises to the cytoplasm. It catalyses the reaction apo-[ACP] + CoA = holo-[ACP] + adenosine 3',5'-bisphosphate + H(+). In terms of biological role, transfers the 4'-phosphopantetheine moiety from coenzyme A to a Ser of acyl-carrier-protein. This chain is Holo-[acyl-carrier-protein] synthase, found in Aliarcobacter butzleri (strain RM4018) (Arcobacter butzleri).